We begin with the raw amino-acid sequence, 2464 residues long: Nonribosomal peptide synthetase NPS2 (2464 aa).

The tract at residues 275-670 is adenylation 1; it reads DDHHPGTSQP…GRIDTQIKLR (396 aa). Residues 814 to 888 form the Carrier 1 domain; it reads TKAEGQLLEI…QIAKALDASS (75 aa). The residue at position 848 (Ser-848) is an O-(pantetheine 4'-phosphoryl)serine. The segment at 924–1325 is condensation 1; the sequence is IYPPFPLQEG…EGLALDLAQG (402 aa). Residues 1364–1437 form the Carrier 2 domain; the sequence is EDLLLRLRKI…RMAASAGKKI (74 aa). Position 1398 is an O-(pantetheine 4'-phosphoryl)serine (Ser-1398). The condensation 2 stretch occupies residues 1479-1887; that stretch reads DVFPVTTLQA…LRVLVDDLDA (409 aa). The region spanning 1917–1993 is the Carrier 3 domain; sequence SSWDEKSSTL…DLVMRAGAED (77 aa). Residue Ser-1954 is modified to O-(pantetheine 4'-phosphoryl)serine. The condensation 3 stretch occupies residues 2047–2340; it reads GGSRYQHVFG…ATQIQDDLRE (294 aa).

The protein belongs to the NRP synthetase family.

It functions in the pathway siderophore biosynthesis. Functionally, nonribosomal peptide synthetase; part of the siderophore basidioferrin biosynthetic pathway. The biosynthesis of basidioferrin depends on the hydroxylation of ornithine to N(5)-hydroxyornithine, catalyzed by the monooxygenase SMO1. The second step, the acylation of N(5)-hydroxy-L-ornithine is catalyzed by a not yet identified N-acyltransferase. Finally, assembly of basidioferrin is catalyzed by the nonribosomal peptide synthase (NRPS) NPS2 via amide bond formation between three L-AHO molecules to release the linear L-AHO trimer. N-5-acetyl-N-5-hydroxy-L-ornithine (L-AHO) and N-5-cis-anhydromevalonyl-N-5-hydroxy-L-ornithine (L-AMHO) are accepted as the substrates by the NPS2 adenylation (A) domain, but only L-AHO is trimerized. The polypeptide is Nonribosomal peptide synthetase NPS2 (Ceriporiopsis subvermispora (strain B) (White-rot fungus)).